Here is a 1724-residue protein sequence, read N- to C-terminus: Protein CHROMATIN REMODELING 5 (1724 aa).

2 disordered regions span residues 24 to 88 (QNAA…QSST) and 104 to 415 (DCQP…DDIE). Positions 25–34 (NAATFQSSPL) are enriched in polar residues. Basic and acidic residues predominate over residues 126 to 144 (EAYHSEDNHSNDRSEKLDS). Positions 138-164 (RSEKLDSENENDNENEEEDNEMNKHQS) form a coiled coil. Composition is skewed to acidic residues over residues 145–157 (ENEN…EEDN), 170–186 (PADE…DEDN), 239–264 (ADMD…DAAD), and 278–297 (VSDE…YEDD). A compositionally biased stretch (basic residues) spans 301 to 313 (KKPKVRQQSKGFR). The short motif at 320 to 327 (ERKSFHVS) is the Nuclear localization signal 1 element. Residues 337–350 (QDDDSEEDSENDND) are compositionally biased toward acidic residues. The segment covering 362–376 (TLRQNNGRSTNTIGQ) has biased composition (polar residues). The segment covering 403-412 (DGKNRKNQKD) has biased composition (basic and acidic residues). Residues 420–499 (DVIEKVLWHQ…FKKVLNYTKK (80 aa)) form the Chromo 1 domain. Positions 505–525 (RYRTALSREEIEVNDVSKEMD) form a coiled coil. The Chromo 2 domain occupies 533–597 (SQVERIIADR…REVSIAVQGK (65 aa)). Residues 637–809 (VNSWLNDTNV…WALLHFLDPG (173 aa)) form the Helicase ATP-binding domain. 650–657 (DEMGLGKT) is a binding site for ATP. The short motif at 760–763 (DEAH) is the DEAH box element. The 152-residue stretch at 943–1094 (ILDKLLVRLR…HLVIQKLNAE (152 aa)) folds into the Helicase C-terminal domain. A coiled-coil region spans residues 1126–1163 (KEDKNDEESKKRLLSMDIDEILERAEQVEEKHTDETEH). Positions 1199–1245 (ALAPRAARNTKSYVDPSHPDRTSKRKKKGSEPPEHTERSQKRRKTEY) are disordered. 2 consecutive short sequence motifs (nuclear localization signal) follow at residues 1224-1231 (KKKGSEPP) and 1348-1355 (LKRVQGLQ). A compositionally biased stretch (basic and acidic residues) spans 1227-1237 (GSEPPEHTERS). 2 disordered regions span residues 1480-1524 (QFKA…EMSD) and 1654-1724 (KFKT…FPPR). The segment covering 1504–1520 (DGPRKTQKAEPLVKEEG) has biased composition (basic and acidic residues). Residues 1658–1667 (AGNSQGSQQV) show a composition bias toward polar residues. Positions 1669–1691 (KGIDTAKFEAWKRRRRTENDVQT) are enriched in basic and acidic residues. Residues 1692-1702 (ERPTITNSNSL) show a composition bias toward polar residues.

This sequence belongs to the SNF2/RAD54 helicase family.

It localises to the nucleus. Its function is as follows. DNA-binding helicase that specifically binds to the promoter of target genes, leading to chromatin remodeling, possibly by promoting deposition of histone H3.3. Probable chromatin remodeling factor. The chain is Protein CHROMATIN REMODELING 5 from Arabidopsis thaliana (Mouse-ear cress).